Consider the following 111-residue polypeptide: Cell division topological specificity factor (111 aa).

This sequence belongs to the MinE family.

Functionally, prevents the cell division inhibition by proteins MinC and MinD at internal division sites while permitting inhibition at polar sites. This ensures cell division at the proper site by restricting the formation of a division septum at the midpoint of the long axis of the cell. The sequence is that of Cell division topological specificity factor from Prochlorococcus marinus (strain MIT 9312).